The following is a 147-amino-acid chain: Large ribosomal subunit protein uL13 (147 aa).

It belongs to the universal ribosomal protein uL13 family. Part of the 50S ribosomal subunit.

In terms of biological role, this protein is one of the early assembly proteins of the 50S ribosomal subunit, although it is not seen to bind rRNA by itself. It is important during the early stages of 50S assembly. This Mycobacteroides abscessus (strain ATCC 19977 / DSM 44196 / CCUG 20993 / CIP 104536 / JCM 13569 / NCTC 13031 / TMC 1543 / L948) (Mycobacterium abscessus) protein is Large ribosomal subunit protein uL13.